Here is a 175-residue protein sequence, read N- to C-terminus: tRNA (cytidine(56)-2'-O)-methyltransferase (175 aa).

Leucine 83 lines the S-adenosyl-L-methionine pocket.

The protein belongs to the aTrm56 family. Homodimer.

It is found in the cytoplasm. The catalysed reaction is cytidine(56) in tRNA + S-adenosyl-L-methionine = 2'-O-methylcytidine(56) in tRNA + S-adenosyl-L-homocysteine + H(+). Its function is as follows. Specifically catalyzes the AdoMet-dependent 2'-O-ribose methylation of cytidine at position 56 in tRNAs. The sequence is that of tRNA (cytidine(56)-2'-O)-methyltransferase from Methanosphaera stadtmanae (strain ATCC 43021 / DSM 3091 / JCM 11832 / MCB-3).